The sequence spans 457 residues: Ribosomal RNA-processing protein 8 (457 aa).

Positions 47–237 (LEAASLSQQT…KSDSQESRAG (191 aa)) are disordered. Polar residues predominate over residues 51-61 (SLSQQTPSLPG). Phosphoserine is present on residues Ser-62, Ser-64, and Ser-105. The span at 129-138 (GEEKGKRKCQ) shows a compositional bias: basic and acidic residues. The segment covering 139–183 (EYSSLHLTQPLDSVDQTVHNSRTSTATIDPSKPSPESMSPNSSHT) has biased composition (polar residues). A phosphoserine mark is found at Ser-172 and Ser-177. Over residues 184–203 (LSRKQWRNRQKNKRRHKNKF) the composition is skewed to basic residues. S-adenosyl-L-methionine is bound by residues His-282, Gly-317, Asp-335, Asp-347, Met-348, and Cys-364.

The protein belongs to the methyltransferase superfamily. RRP8 family. In terms of assembly, component of the eNoSC complex, composed of SIRT1, SUV39H1 and RRP8.

The protein localises to the nucleus. It is found in the nucleolus. Its function is as follows. Essential component of the eNoSC (energy-dependent nucleolar silencing) complex, a complex that mediates silencing of rDNA in response to intracellular energy status and acts by recruiting histone-modifying enzymes. The eNoSC complex is able to sense the energy status of cell: upon glucose starvation, elevation of NAD(+)/NADP(+) ratio activates SIRT1, leading to histone H3 deacetylation followed by dimethylation of H3 at 'Lys-9' (H3K9me2) by SUV39H1 and the formation of silent chromatin in the rDNA locus. In the complex, RRP8 binds to H3K9me2 and probably acts as a methyltransferase. Its substrates are however unknown. The chain is Ribosomal RNA-processing protein 8 (Rrp8) from Mus musculus (Mouse).